A 355-amino-acid polypeptide reads, in one-letter code: Proto-oncogene Wnt-3 (355 aa).

Residues 1-21 (MEPHLLGLLLGLLLSGTRVLA) form the signal peptide. Disulfide bonds link Cys80/Cys91, Cys131/Cys139, Cys141/Cys158, Cys206/Cys220, Cys208/Cys215, Cys284/Cys315, Cys300/Cys310, Cys314/Cys354, Cys330/Cys345, Cys332/Cys342, and Cys337/Cys338. N-linked (GlcNAc...) asparagine glycosylation occurs at Asn90. A lipid anchor (O-palmitoleoyl serine; by PORCN) is attached at Ser212. N-linked (GlcNAc...) asparagine glycosylation is present at Asn301.

Belongs to the Wnt family. Forms a soluble 1:1 complex with AFM; this prevents oligomerization and is required for prolonged biological activity. The complex with AFM may represent the physiological form in body fluids. Interacts with PORCN. Interacts with WLS. Post-translationally, palmitoleoylation is required for efficient binding to frizzled receptors. Depalmitoleoylation leads to Wnt signaling pathway inhibition. In terms of tissue distribution, detected at low levels in adult brain. Dorsal portion of the neural tube, dorsal ectoderm, the branchial arches, and the limb buds.

It is found in the secreted. Its subcellular location is the extracellular space. It localises to the extracellular matrix. Functionally, ligand for members of the frizzled family of seven transmembrane receptors. Functions in the canonical Wnt signaling pathway that results in activation of transcription factors of the TCF/LEF family. Required for normal gastrulation, formation of the primitive streak, and for the formation of the mesoderm during early embryogenesis. Required for normal formation of the apical ectodermal ridge and for normal embryonic limb development. The polypeptide is Proto-oncogene Wnt-3 (Wnt3) (Mus musculus (Mouse)).